The primary structure comprises 239 residues: Dihydromethanopterin reductase (acceptor) (239 aa).

4Fe-4S ferredoxin-type domains are found at residues 144–175 (MPYN…EKNG) and 176–205 (VTDQ…GGPV). [4Fe-4S] cluster is bound by residues C153, C156, C159, C165, C185, C188, C191, and C195.

As to quaternary structure, homodimer. It depends on [4Fe-4S] cluster as a cofactor.

The catalysed reaction is 5,6,7,8-tetrahydromethanopterin + A = 7,8-dihydromethanopterin + AH2. Its pathway is cofactor biosynthesis; 5,6,7,8-tetrahydromethanopterin biosynthesis. Involved in the biosynthesis of tetrahydromethanopterin, a coenzyme used in methanogenesis. Catalyzes the reduction of dihydromethanopterin (H(2)MPT) to tetrahydromethanopterin (H(4)MPT). Ferredoxin may serve as an electron donor. This chain is Dihydromethanopterin reductase (acceptor), found in Methanosarcina mazei (strain ATCC BAA-159 / DSM 3647 / Goe1 / Go1 / JCM 11833 / OCM 88) (Methanosarcina frisia).